The chain runs to 416 residues: Gamma-glutamyl phosphate reductase (416 aa).

It belongs to the gamma-glutamyl phosphate reductase family.

It localises to the cytoplasm. It carries out the reaction L-glutamate 5-semialdehyde + phosphate + NADP(+) = L-glutamyl 5-phosphate + NADPH + H(+). It functions in the pathway amino-acid biosynthesis; L-proline biosynthesis; L-glutamate 5-semialdehyde from L-glutamate: step 2/2. Its function is as follows. Catalyzes the NADPH-dependent reduction of L-glutamate 5-phosphate into L-glutamate 5-semialdehyde and phosphate. The product spontaneously undergoes cyclization to form 1-pyrroline-5-carboxylate. The sequence is that of Gamma-glutamyl phosphate reductase from Salmonella agona (strain SL483).